We begin with the raw amino-acid sequence, 591 residues long: L-fucose isomerase (591 aa).

Active-site proton acceptor residues include E338 and D362. Mn(2+) is bound by residues E338, D362, and H529.

The protein belongs to the L-fucose isomerase family. It depends on Mn(2+) as a cofactor.

It localises to the cytoplasm. It catalyses the reaction L-fucose = L-fuculose. It participates in carbohydrate degradation; L-fucose degradation; L-lactaldehyde and glycerone phosphate from L-fucose: step 1/3. In terms of biological role, converts the aldose L-fucose into the corresponding ketose L-fuculose. The protein is L-fucose isomerase of Bacteroides thetaiotaomicron (strain ATCC 29148 / DSM 2079 / JCM 5827 / CCUG 10774 / NCTC 10582 / VPI-5482 / E50).